The primary structure comprises 276 residues: Sec-independent protein translocase protein TatC (276 aa).

The interval 1-29 (MVSLTSVPPYADATPDTRASSGPAPGRRK) is disordered. The next 6 membrane-spanning stretches (helical) occupy residues 49–69 (GGLV…LVLL), 103–123 (LFLA…AFVT), 136–156 (GFLG…WWVL), 187–207 (LVLA…LNLA), 221–241 (WAVL…DALT), and 242–262 (MVLV…VAVW).

This sequence belongs to the TatC family. As to quaternary structure, the Tat system comprises two distinct complexes: a TatABC complex, containing multiple copies of TatA, TatB and TatC subunits, and a separate TatA complex, containing only TatA subunits. Substrates initially bind to the TatABC complex, which probably triggers association of the separate TatA complex to form the active translocon.

It localises to the cell membrane. Its function is as follows. Part of the twin-arginine translocation (Tat) system that transports large folded proteins containing a characteristic twin-arginine motif in their signal peptide across membranes. Together with TatB, TatC is part of a receptor directly interacting with Tat signal peptides. This chain is Sec-independent protein translocase protein TatC, found in Xylanimonas cellulosilytica (strain DSM 15894 / JCM 12276 / CECT 5975 / KCTC 9989 / LMG 20990 / NBRC 107835 / XIL07).